The primary structure comprises 202 residues: Heart- and neural crest derivatives-expressed protein 1 (202 aa).

Residues 83-135 (RKGVGGPKKERRRTESINSAFAELRECIPNVPADTKLSKIKTLRLATSYIAYL) enclose the bHLH domain. The interval 143 to 187 (SQPGEPEGFKAELKKADGRENKRKRETQPEVYSQPLAHGEKKLKG) is disordered. The span at 149–162 (EGFKAELKKADGRE) shows a compositional bias: basic and acidic residues.

In terms of assembly, efficient DNA binding requires dimerization with another bHLH protein.

It is found in the nucleus. The protein localises to the nucleoplasm. Its subcellular location is the nucleolus. Its function is as follows. Transcription factor. Plays an essential role in cardiac morphogenesis. The sequence is that of Heart- and neural crest derivatives-expressed protein 1 (HAND1) from Gallus gallus (Chicken).